The primary structure comprises 157 residues: uncharacterized protein (157 aa).

Positions 3–157 (FTLEDMTEEE…TNIRMRKQLC (155 aa)) constitute an N-acetyltransferase domain.

The protein belongs to the acetyltransferase family.

This is an uncharacterized protein from Bacillus subtilis (strain 168).